We begin with the raw amino-acid sequence, 129 residues long: Small ribosomal subunit protein uS11 (129 aa).

Belongs to the universal ribosomal protein uS11 family. Part of the 30S ribosomal subunit. Interacts with proteins S7 and S18. Binds to IF-3.

In terms of biological role, located on the platform of the 30S subunit, it bridges several disparate RNA helices of the 16S rRNA. Forms part of the Shine-Dalgarno cleft in the 70S ribosome. This is Small ribosomal subunit protein uS11 from Rhodopseudomonas palustris (strain BisB18).